Reading from the N-terminus, the 175-residue chain is Capsid protein (175 aa).

The tract at residues 1–35 (MFRQEMARYPKKSIKKRRVGRRKYGSKAATSHDYS) is disordered. The span at 9-25 (YPKKSIKKRRVGRRKYG) shows a compositional bias: basic residues.

This sequence belongs to the nanoviridae capsid protein family.

It is found in the virion. In Musa (BBTV), this protein is Capsid protein (DNA-S).